A 220-amino-acid chain; its full sequence is Deoxyribose-phosphate aldolase 2 (220 aa).

Asp89 acts as the Proton donor/acceptor in catalysis. The active-site Schiff-base intermediate with acetaldehyde is Lys151. Lys180 functions as the Proton donor/acceptor in the catalytic mechanism.

The protein belongs to the DeoC/FbaB aldolase family. DeoC type 1 subfamily.

The protein localises to the cytoplasm. The enzyme catalyses 2-deoxy-D-ribose 5-phosphate = D-glyceraldehyde 3-phosphate + acetaldehyde. Its pathway is carbohydrate degradation; 2-deoxy-D-ribose 1-phosphate degradation; D-glyceraldehyde 3-phosphate and acetaldehyde from 2-deoxy-alpha-D-ribose 1-phosphate: step 2/2. Its function is as follows. Catalyzes a reversible aldol reaction between acetaldehyde and D-glyceraldehyde 3-phosphate to generate 2-deoxy-D-ribose 5-phosphate. This Staphylococcus aureus (strain N315) protein is Deoxyribose-phosphate aldolase 2.